The chain runs to 533 residues: Dipeptide-binding protein (533 aa).

A signal peptide spans 1–24 (MRKILPLRAWLAAGLILGSPFSHA).

This sequence belongs to the bacterial solute-binding protein 5 family.

It is found in the periplasm. Its function is as follows. Binds different dipeptides. Probably bind only L-amino acid containing dipeptides. The sequence is that of Dipeptide-binding protein from Pseudomonas aeruginosa (strain ATCC 15692 / DSM 22644 / CIP 104116 / JCM 14847 / LMG 12228 / 1C / PRS 101 / PAO1).